The chain runs to 583 residues: Bifunctional lycopene cyclase/phytoene synthase (583 aa).

The tract at residues 1 to 243 is lycopene beta-cyclase; that stretch reads MGFDYALVHL…IVFGQLAFDN (243 aa). The next 7 helical transmembrane spans lie at 3–23, 35–55, 75–97, 120–140, 151–171, 173–193, and 221–241; these read FDYALVHLKYTIPPAVLLTWL, KVGYLVSIAVASTIPWDSYLI, IPLEEVFFFIIQTYNTSLLYLLL, YMRLAGQVFFLALIAWGWRCI, LILVWAGPFLLMLWSLAYQFI, ALPVTNTALPIFLPTLYLWVV, and IEEALFFLATNALIVFGQLAF. The phytoene synthase stretch occupies residues 250-583; that stretch reads TFPHLFTGPS…MVAWRTLNSK (334 aa).

It in the N-terminal section; belongs to the lycopene beta-cyclase family. The protein in the C-terminal section; belongs to the phytoene/squalene synthase family.

Its subcellular location is the membrane. It carries out the reaction all-trans-lycopene = gamma-carotene. The enzyme catalyses gamma-carotene = all-trans-beta-carotene. The catalysed reaction is 2 (2E,6E,10E)-geranylgeranyl diphosphate = 15-cis-phytoene + 2 diphosphate. The protein operates within carotenoid biosynthesis; beta-carotene biosynthesis. It functions in the pathway carotenoid biosynthesis; phytoene biosynthesis; all-trans-phytoene from geranylgeranyl diphosphate: step 1/1. In terms of biological role, bifunctional enzyme that catalyzes the reactions from geranylgeranyl diphosphate to phytoene (phytoene synthase) and lycopene to beta-carotene via the intermediate gamma-carotene (lycopene cyclase). The chain is Bifunctional lycopene cyclase/phytoene synthase from Pyrenophora tritici-repentis (strain Pt-1C-BFP) (Wheat tan spot fungus).